The primary structure comprises 383 residues: S-adenosylmethionine synthase 1 (383 aa).

An ATP-binding site is contributed by His15. Asp17 contacts Mg(2+). Glu43 is a K(+) binding site. L-methionine-binding residues include Glu56 and Gln99. The flexible loop stretch occupies residues 99–109 (QSPDIDLGVSR). ATP contacts are provided by residues 162–164 (DGK), 228–229 (RF), Asp237, 243–244 (RK), Ala260, and Lys264. An L-methionine-binding site is contributed by Asp237. Position 268 (Lys268) interacts with L-methionine.

The protein belongs to the AdoMet synthase family. In terms of assembly, homotetramer; dimer of dimers. It depends on Mg(2+) as a cofactor. K(+) is required as a cofactor.

The protein resides in the cytoplasm. It catalyses the reaction L-methionine + ATP + H2O = S-adenosyl-L-methionine + phosphate + diphosphate. Its pathway is amino-acid biosynthesis; S-adenosyl-L-methionine biosynthesis; S-adenosyl-L-methionine from L-methionine: step 1/1. Catalyzes the formation of S-adenosylmethionine (AdoMet) from methionine and ATP. The overall synthetic reaction is composed of two sequential steps, AdoMet formation and the subsequent tripolyphosphate hydrolysis which occurs prior to release of AdoMet from the enzyme. This Rhodospirillum rubrum (strain ATCC 11170 / ATH 1.1.1 / DSM 467 / LMG 4362 / NCIMB 8255 / S1) protein is S-adenosylmethionine synthase 1.